Consider the following 635-residue polypeptide: Endo-1,4-beta-xylanase B (635 aa).

The GH10 domain occupies 1-337 (MNLKTAYEPY…KEAYYAVLKA (337 aa)). Glu150 functions as the Proton donor in the catalytic mechanism. The Nucleophile role is filled by Glu255.

Belongs to the glycosyl hydrolase 10 (cellulase F) family.

It carries out the reaction Endohydrolysis of (1-&gt;4)-beta-D-xylosidic linkages in xylans.. The protein operates within glycan degradation; xylan degradation. B.fibrisolvens is located in the rumen of ruminant animals, where it contributes to the animal's digestion of plant material by hydrolyzing hemicellulose with its xylanases. The sequence is that of Endo-1,4-beta-xylanase B (xynB) from Butyrivibrio fibrisolvens.